Reading from the N-terminus, the 233-residue chain is UPF0502 protein Sden_2282 (233 aa).

Residues 178–198 are compositionally biased toward polar residues; it reads TQHQRPPQTPHLSSRTNVDNS. A disordered region spans residues 178–204; it reads TQHQRPPQTPHLSSRTNVDNSYESDER.

This sequence belongs to the UPF0502 family.

In Shewanella denitrificans (strain OS217 / ATCC BAA-1090 / DSM 15013), this protein is UPF0502 protein Sden_2282.